The sequence spans 196 residues: 3-isopropylmalate dehydratase small subunit (196 aa).

Belongs to the LeuD family. LeuD type 1 subfamily. As to quaternary structure, heterodimer of LeuC and LeuD.

The catalysed reaction is (2R,3S)-3-isopropylmalate = (2S)-2-isopropylmalate. The protein operates within amino-acid biosynthesis; L-leucine biosynthesis; L-leucine from 3-methyl-2-oxobutanoate: step 2/4. Functionally, catalyzes the isomerization between 2-isopropylmalate and 3-isopropylmalate, via the formation of 2-isopropylmaleate. The sequence is that of 3-isopropylmalate dehydratase small subunit from Corynebacterium efficiens (strain DSM 44549 / YS-314 / AJ 12310 / JCM 11189 / NBRC 100395).